The chain runs to 276 residues: Shikimate dehydrogenase (NADP(+)) (276 aa).

Shikimate-binding positions include 18–20 (SKS) and threonine 65. Lysine 69 acts as the Proton acceptor in catalysis. Position 81 (glutamate 81) interacts with NADP(+). Positions 90 and 106 each coordinate shikimate. Residues 130 to 134 (GAGGA), 154 to 159 (NRTSSK), and methionine 217 contribute to the NADP(+) site. Tyrosine 219 contacts shikimate. Residue glycine 241 participates in NADP(+) binding.

The protein belongs to the shikimate dehydrogenase family. As to quaternary structure, homodimer.

It catalyses the reaction shikimate + NADP(+) = 3-dehydroshikimate + NADPH + H(+). The protein operates within metabolic intermediate biosynthesis; chorismate biosynthesis; chorismate from D-erythrose 4-phosphate and phosphoenolpyruvate: step 4/7. Its function is as follows. Involved in the biosynthesis of the chorismate, which leads to the biosynthesis of aromatic amino acids. Catalyzes the reversible NADPH linked reduction of 3-dehydroshikimate (DHSA) to yield shikimate (SA). This is Shikimate dehydrogenase (NADP(+)) from Vibrio atlanticus (strain LGP32) (Vibrio splendidus (strain Mel32)).